The sequence spans 135 residues: UPF0355 protein SACOL0457 (135 aa).

The protein belongs to the UPF0355 family.

The protein is UPF0355 protein SACOL0457 of Staphylococcus aureus (strain COL).